We begin with the raw amino-acid sequence, 761 residues long: Xaa-Pro dipeptidyl-peptidase (761 aa).

Residues Ser347, Asp467, and His497 each act as charge relay system in the active site.

It belongs to the peptidase S15 family. As to quaternary structure, homodimer.

The protein localises to the cytoplasm. The enzyme catalyses Hydrolyzes Xaa-Pro-|- bonds to release unblocked, N-terminal dipeptides from substrates including Ala-Pro-|-p-nitroanilide and (sequentially) Tyr-Pro-|-Phe-Pro-|-Gly-Pro-|-Ile.. Removes N-terminal dipeptides sequentially from polypeptides having unsubstituted N-termini provided that the penultimate residue is proline. This chain is Xaa-Pro dipeptidyl-peptidase, found in Streptococcus agalactiae serotype V (strain ATCC BAA-611 / 2603 V/R).